Here is a 354-residue protein sequence, read N- to C-terminus: Type II restriction enzyme BanI (354 aa).

As to quaternary structure, homodimer.

It catalyses the reaction Endonucleolytic cleavage of DNA to give specific double-stranded fragments with terminal 5'-phosphates.. Its function is as follows. A P subtype restriction enzyme that recognizes the double-stranded sequence 5'-GGYRCC-3' and cleaves after G-1. This chain is Type II restriction enzyme BanI (banIR), found in Aneurinibacillus aneurinilyticus (Bacillus aneurinolyticus).